We begin with the raw amino-acid sequence, 141 residues long: Protein NrdI (141 aa).

It belongs to the NrdI family.

Its function is as follows. Probably involved in ribonucleotide reductase function. In Bifidobacterium animalis subsp. lactis (strain AD011), this protein is Protein NrdI.